A 221-amino-acid polypeptide reads, in one-letter code: Beta-phosphoglucomutase (221 aa).

Asp8 (nucleophile) is an active-site residue. Mg(2+) contacts are provided by Asp8 and Asp10. The residue at position 8 (Asp8) is a 4-aspartylphosphate. The active-site Proton donor/acceptor is Asp10. The beta-D-glucose 6-phosphate site is built by Asp10, Gly46, Val47, Arg49, Ser116, Lys117, and Asn118. Residue Asp170 participates in Mg(2+) binding.

This sequence belongs to the HAD-like hydrolase superfamily. CbbY/CbbZ/Gph/YieH family. Monomer. The cofactor is Mg(2+). In terms of processing, autophosphorylated.

Its subcellular location is the cytoplasm. It catalyses the reaction beta-D-glucose 1-phosphate = beta-D-glucose 6-phosphate. With respect to regulation, activated by phosphorylation. Competitively inhibited by alpha-D-galactose-1-phosphate. Functionally, catalyzes the interconversion of D-glucose 1-phosphate (G1P) and D-glucose 6-phosphate (G6P), forming beta-D-glucose 1,6-(bis)phosphate (beta-G16P) as an intermediate. The beta-phosphoglucomutase (Beta-PGM) acts on the beta-C(1) anomer of G1P. Glucose or lactose are used in preference to maltose, which is only utilized after glucose or lactose has been exhausted. It plays a key role in the regulation of the flow of carbohydrate intermediates in glycolysis and the formation of the sugar nucleotide UDP-glucose. This Lactococcus lactis subsp. lactis (strain IL1403) (Streptococcus lactis) protein is Beta-phosphoglucomutase.